A 692-amino-acid chain; its full sequence is Chaperone protein dnaK1 (692 aa).

Thr197 carries the phosphothreonine; by autocatalysis modification.

The protein belongs to the heat shock protein 70 family.

Its function is as follows. Acts as a chaperone. The sequence is that of Chaperone protein dnaK1 (dnaK1) from Synechocystis sp. (strain ATCC 27184 / PCC 6803 / Kazusa).